Reading from the N-terminus, the 544-residue chain is Chaperonin GroEL (544 aa).

ATP-binding positions include 30–33 (TLGP), Lys-51, 87–91 (DGTTT), Gly-415, 481–483 (DAL), and Asp-497.

It belongs to the chaperonin (HSP60) family. Forms a cylinder of 14 subunits composed of two heptameric rings stacked back-to-back. Interacts with the co-chaperonin GroES.

The protein resides in the cytoplasm. It carries out the reaction ATP + H2O + a folded polypeptide = ADP + phosphate + an unfolded polypeptide.. Together with its co-chaperonin GroES, plays an essential role in assisting protein folding. The GroEL-GroES system forms a nano-cage that allows encapsulation of the non-native substrate proteins and provides a physical environment optimized to promote and accelerate protein folding. The protein is Chaperonin GroEL of Chlamydia trachomatis serovar L2 (strain ATCC VR-902B / DSM 19102 / 434/Bu).